The primary structure comprises 244 residues: Na(+)-translocating NADH-quinone reductase subunit E (244 aa).

The next 6 membrane-spanning stretches (helical) occupy residues 11 to 31 (LLGIFLQATFIQNILLSTFLG), 47 to 67 (GLGMSVALVLTITGSINWLIH), 90 to 110 (FLELITFIVVIAAFTQILELL), 123 to 143 (GIFLPLIAVNCAILGGVLFGI), 153 to 173 (VVFSLGSGCGWWLAIVLFATI), and 189 to 209 (MGISFITTGLIAMAFMGLTGI).

It belongs to the NqrDE/RnfAE family. Composed of six subunits; NqrA, NqrB, NqrC, NqrD, NqrE and NqrF.

The protein resides in the cell inner membrane. The catalysed reaction is a ubiquinone + n Na(+)(in) + NADH + H(+) = a ubiquinol + n Na(+)(out) + NAD(+). Functionally, NQR complex catalyzes the reduction of ubiquinone-1 to ubiquinol by two successive reactions, coupled with the transport of Na(+) ions from the cytoplasm to the periplasm. NqrA to NqrE are probably involved in the second step, the conversion of ubisemiquinone to ubiquinol. This is Na(+)-translocating NADH-quinone reductase subunit E from Chlamydia muridarum (strain MoPn / Nigg).